A 453-amino-acid polypeptide reads, in one-letter code: Putative dipeptidase UREG_03382 (453 aa).

Positions 1 to 33 are disordered; the sequence is MSTRDHVKQSPMPVQEGYPRSSKEFSPPSSRSR. A helical transmembrane segment spans residues 41–63; it reads LTMSLLIAAGAATFSKYIFPLGS. Zn(2+) is bound by residues His-95, Asp-97, and Glu-208. The cysteines at positions 147 and 223 are disulfide-linked. Residue His-221 coordinates substrate. Residues His-265 and His-286 each coordinate Zn(2+). Residues Arg-297 and Asp-357 each coordinate substrate. N-linked (GlcNAc...) asparagine glycosylation is found at Asn-370 and Asn-443.

The protein belongs to the metallo-dependent hydrolases superfamily. Peptidase M19 family. Zn(2+) serves as cofactor.

It is found in the membrane. It catalyses the reaction an L-aminoacyl-L-amino acid + H2O = 2 an L-alpha-amino acid. Hydrolyzes a wide range of dipeptides. The chain is Putative dipeptidase UREG_03382 from Uncinocarpus reesii (strain UAMH 1704).